Reading from the N-terminus, the 1992-residue chain is E3 ubiquitin-protein ligase TRIP12 (1992 aa).

The segment covering 1-10 (MSNRPNNNPG) has biased composition (polar residues). The segment at 1 to 398 (MSNRPNNNPG…SGESESDDSE (398 aa)) is disordered. Residue serine 2 is modified to N-acetylserine. Serine 12 is subject to Phosphoserine. The span at 18–27 (RNTAGAQPQD) shows a compositional bias: polar residues. Low complexity predominate over residues 29 to 43 (SIGGRSCSSSSVVIV). A compositionally biased stretch (basic and acidic residues) spans 48 to 70 (DPDRANTSEKQKTGQVPKKDNSR). Phosphoserine is present on residues serine 77, serine 85, and serine 100. The span at 78–88 (PDYNRTNSPSS) shows a compositional bias: polar residues. A compositionally biased stretch (polar residues) spans 154–164 (SSCIKSASVSE). 2 stretches are compositionally biased toward low complexity: residues 175 to 188 (PTKLASKSAASAKA) and 196 to 215 (SSSAASTSSSSSAVASASSA). Residue lysine 181 is modified to N6-acetyllysine. Residues 280-290 (PGSSKSETSKP) show a composition bias toward polar residues. 2 positions are modified to phosphoserine: serine 310 and serine 312. The span at 330 to 339 (GSCASASRRG) shows a compositional bias: low complexity. Over residues 346 to 358 (GAAEARRQEKMAD) the composition is skewed to basic and acidic residues. A compositionally biased stretch (polar residues) spans 362–371 (NQETVNSSAA). The 88-residue stretch at 749–836 (MLKKGNAQNT…DPELAKSFIK (88 aa)) folds into the WWE domain. The interval 938 to 1044 (SLLTSPPKAC…QSPKSSFLAS (107 aa)) is disordered. Serine 942 carries the phosphoserine modification. The segment covering 948-960 (TNGSGSLGSTPSV) has biased composition (polar residues). The segment covering 961–973 (NSGTATAATNASA) has biased composition (low complexity). 2 positions are modified to phosphoserine: serine 991 and serine 997. The segment covering 1001–1014 (KRKRLPKRGSRRPK) has biased composition (basic residues). Serine 1016 carries the post-translational modification Phosphoserine. The segment covering 1017–1026 (PPRDDDKVDN) has biased composition (basic and acidic residues). The span at 1029-1040 (KSPTTTQSPKSS) shows a compositional bias: low complexity. A phosphoserine mark is found at serine 1030, serine 1317, serine 1322, serine 1329, and serine 1376. Position 1377 is a phosphothreonine (threonine 1377). Disordered stretches follow at residues 1407 to 1434 (SNKDCVGGKRGRAQTAPTKTSPRNAKKH) and 1568 to 1587 (TNPEINQSDSQDSRVAPRLD). Residue lysine 1425 is modified to N6-acetyllysine. A Phosphoserine modification is found at serine 1427. Positions 1496-1570 (EIIPTSEFIN…AMQRLLDTNP (75 aa)) are K-box. An HECT domain is found at 1885–1992 (PDHGYTHDSR…REGQQSFHLS (108 aa)). Cysteine 1959 functions as the Glycyl thioester intermediate in the catalytic mechanism.

It belongs to the UPL family. K-HECT subfamily. Interacts with MYC; leading to disrupt interaction with isoform p19ARF/ARF of CDKN2A. Interacts with TRADD; leading to disrupt interaction with isoform p19ARF/ARF of CDKN2A. Interacts with SMARCC1; leading to disrupt interaction with SMARCE1.

The protein resides in the nucleus. The protein localises to the nucleoplasm. The catalysed reaction is S-ubiquitinyl-[E2 ubiquitin-conjugating enzyme]-L-cysteine + [acceptor protein]-L-lysine = [E2 ubiquitin-conjugating enzyme]-L-cysteine + N(6)-ubiquitinyl-[acceptor protein]-L-lysine.. Its pathway is protein modification; protein ubiquitination. E3 ubiquitin-protein ligase involved in ubiquitin fusion degradation (UFD) pathway and regulation of DNA repair. Part of the ubiquitin fusion degradation (UFD) pathway, a process that mediates ubiquitination of protein at their N-terminus, regardless of the presence of lysine residues in target proteins. Acts as a key regulator of DNA damage response by acting as a suppressor of RNF168, an E3 ubiquitin-protein ligase that promotes accumulation of 'Lys-63'-linked histone H2A and H2AX at DNA damage sites, thereby acting as a guard against excessive spreading of ubiquitinated chromatin at damaged chromosomes. In normal cells, mediates ubiquitination and degradation of isoform p19ARF/ARF of CDKN2A, a lysine-less tumor suppressor required for p53/TP53 activation under oncogenic stress. In cancer cells, however, isoform p19ARF/ARF and TRIP12 are located in different cell compartments, preventing isoform p19ARF/ARF ubiquitination and degradation. Does not mediate ubiquitination of isoform p16-INK4a of CDKN2A. Also catalyzes ubiquitination of NAE1 and SMARCE1, leading to their degradation. Ubiquitination and degradation of target proteins is regulated by interaction with proteins such as MYC, TRADD or SMARCC1, which disrupt the interaction between TRIP12 and target proteins. Mediates ubiquitination of ASXL1: following binding to N(6)-methyladenosine methylated DNA, ASXL1 is ubiquitinated by TRIP12, leading to its degradation and subsequent inactivation of the PR-DUB complex. The chain is E3 ubiquitin-protein ligase TRIP12 (TRIP12) from Bos taurus (Bovine).